A 151-amino-acid chain; its full sequence is UPF0178 protein PST_0536 (151 aa).

It belongs to the UPF0178 family.

This Stutzerimonas stutzeri (strain A1501) (Pseudomonas stutzeri) protein is UPF0178 protein PST_0536.